Reading from the N-terminus, the 489-residue chain is Rhamnulokinase (489 aa).

13-17 (ASSGR) lines the ATP pocket. Residues cysteine 68 and cysteine 222 are joined by a disulfide bond. Substrate-binding positions include glycine 83 and 236–238 (HDT). The active-site Proton acceptor is the aspartate 237. Threonine 259 contacts ATP. Asparagine 296 lines the substrate pocket. Glutamine 304 contacts ATP. Cysteines 353 and 370 form a disulfide. Residue glycine 402 coordinates ATP. An intrachain disulfide couples cysteine 413 to cysteine 417.

This sequence belongs to the rhamnulokinase family. The cofactor is Mg(2+).

The catalysed reaction is L-rhamnulose + ATP = L-rhamnulose 1-phosphate + ADP + H(+). It participates in carbohydrate degradation; L-rhamnose degradation; glycerone phosphate from L-rhamnose: step 2/3. Involved in the catabolism of L-rhamnose (6-deoxy-L-mannose). Catalyzes the transfer of the gamma-phosphate group from ATP to the 1-hydroxyl group of L-rhamnulose to yield L-rhamnulose 1-phosphate. The chain is Rhamnulokinase from Salmonella dublin (strain CT_02021853).